A 247-amino-acid chain; its full sequence is MSLQGKVALVTGASRGIGQAIALELGRLGAVVIGTATSASGAEKIAETLKANGVEGAGLVLDVSSDESVAATLEHIQQHLGQPLIVVNNAGITRDNLLVRMKDDEWFDVVNTNLNSLYRLSKAVLRGMTKARWGRIINIGSVVGAMGNAGQTNYAAAKAGLEGFTRALAREVGSRAITVNAVAPGFIDTDMTRELPEAQREALLGQIPLGRLGQAEEIAKVVGFLASDGAAYVTGATVPVNGGMYMS.

NADP(+)-binding positions include 12 to 15 (GASR), Thr37, 62 to 63 (DV), and Asn89. Residue Ser141 participates in substrate binding. Tyr154 acts as the Proton acceptor in catalysis. Residues 154 to 158 (YAAAK) and Ile187 each bind NADP(+).

Belongs to the short-chain dehydrogenases/reductases (SDR) family. Homotetramer.

The catalysed reaction is a (3R)-hydroxyacyl-[ACP] + NADP(+) = a 3-oxoacyl-[ACP] + NADPH + H(+). It participates in lipid metabolism; fatty acid biosynthesis. Its function is as follows. Catalyzes the NADPH-dependent reduction of beta-ketoacyl-ACP substrates to beta-hydroxyacyl-ACP products, the first reductive step in the elongation cycle of fatty acid biosynthesis. This chain is 3-oxoacyl-[acyl-carrier-protein] reductase FabG (fabG), found in Pseudomonas aeruginosa (strain ATCC 15692 / DSM 22644 / CIP 104116 / JCM 14847 / LMG 12228 / 1C / PRS 101 / PAO1).